Here is a 71-residue protein sequence, read N- to C-terminus: Biotinylated protein TB7.3 homolog (71 aa).

The region spanning 2–71 (AEDVRAEIVA…QAGHLIAVID (70 aa)) is the Biotinyl-binding domain. Lys-37 bears the N6-biotinyllysine mark.

The polypeptide is Biotinylated protein TB7.3 homolog (Mycolicibacterium smegmatis (strain ATCC 700084 / mc(2)155) (Mycobacterium smegmatis)).